The following is a 56-amino-acid chain: Large ribosomal subunit protein bL33 (56 aa).

Residues methionine 1–leucine 12 show a composition bias toward basic and acidic residues. The tract at residues methionine 1–lysine 28 is disordered. The segment covering threonine 15 to serine 25 has biased composition (polar residues).

The protein belongs to the bacterial ribosomal protein bL33 family.

This is Large ribosomal subunit protein bL33 from Albidiferax ferrireducens (strain ATCC BAA-621 / DSM 15236 / T118) (Rhodoferax ferrireducens).